Consider the following 328-residue polypeptide: DNA-directed RNA polymerase subunit alpha (328 aa).

The interval 1 to 235 (MQGSVTEFLK…EQLDAFVDLR (235 aa)) is alpha N-terminal domain (alpha-NTD). An alpha C-terminal domain (alpha-CTD) region spans residues 249-328 (FDPILLRPVD…ENWPPASLAE (80 aa)).

Belongs to the RNA polymerase alpha chain family. Homodimer. The RNAP catalytic core consists of 2 alpha, 1 beta, 1 beta' and 1 omega subunit. When a sigma factor is associated with the core the holoenzyme is formed, which can initiate transcription.

The enzyme catalyses RNA(n) + a ribonucleoside 5'-triphosphate = RNA(n+1) + diphosphate. Functionally, DNA-dependent RNA polymerase catalyzes the transcription of DNA into RNA using the four ribonucleoside triphosphates as substrates. The chain is DNA-directed RNA polymerase subunit alpha from Pseudoalteromonas translucida (strain TAC 125).